Consider the following 1007-residue polypeptide: Probable beta-galactosidase A (1007 aa).

The signal sequence occupies residues 1-18 (MRLLPVWTAALLAAQAAG). 4 residues coordinate substrate: Y96, N140, A141, and E142. Residue N156 is glycosylated (N-linked (GlcNAc...) asparagine). N199 is a substrate binding site. The active-site Proton donor is E200. C205 and C206 are oxidised to a cystine. Y260 is a substrate binding site. C266 and C315 are joined by a disulfide. The active-site Nucleophile is the E298. A substrate-binding site is contributed by Y364. N-linked (GlcNAc...) asparagine glycans are attached at residues N405, N422, N621, N740, N775, and N914.

The protein belongs to the glycosyl hydrolase 35 family.

It localises to the secreted. The catalysed reaction is Hydrolysis of terminal non-reducing beta-D-galactose residues in beta-D-galactosides.. Its function is as follows. Cleaves beta-linked terminal galactosyl residues from gangliosides, glycoproteins, and glycosaminoglycans. The sequence is that of Probable beta-galactosidase A (lacA) from Emericella nidulans (strain FGSC A4 / ATCC 38163 / CBS 112.46 / NRRL 194 / M139) (Aspergillus nidulans).